The primary structure comprises 101 residues: Urease subunit beta (101 aa).

It belongs to the urease beta subunit family. Heterotrimer of UreA (gamma), UreB (beta) and UreC (alpha) subunits. Three heterotrimers associate to form the active enzyme.

The protein localises to the cytoplasm. The catalysed reaction is urea + 2 H2O + H(+) = hydrogencarbonate + 2 NH4(+). The protein operates within nitrogen metabolism; urea degradation; CO(2) and NH(3) from urea (urease route): step 1/1. The sequence is that of Urease subunit beta from Rhizobium etli (strain CIAT 652).